The primary structure comprises 220 residues: Probable septum site-determining protein MinC (220 aa).

It belongs to the MinC family. Interacts with MinD and FtsZ.

Functionally, cell division inhibitor that blocks the formation of polar Z ring septums. Rapidly oscillates between the poles of the cell to destabilize FtsZ filaments that have formed before they mature into polar Z rings. Prevents FtsZ polymerization. In Prochlorococcus marinus subsp. pastoris (strain CCMP1986 / NIES-2087 / MED4), this protein is Probable septum site-determining protein MinC.